The primary structure comprises 260 residues: 3-alpha-(or 20-beta)-hydroxysteroid dehydrogenase (260 aa).

NAD(+) is bound by residues arginine 17, methionine 19, aspartate 38, aspartate 61, valine 62, asparagine 88, tyrosine 153, lysine 157, valine 186, threonine 188, and threonine 191. Tyrosine 153 functions as the Proton acceptor in the catalytic mechanism.

Belongs to the short-chain dehydrogenases/reductases (SDR) family. Homotetramer.

The catalysed reaction is androstan-3alpha,17beta-diol + NAD(+) = 17beta-hydroxyandrostanone + NADH + H(+). It functions in the pathway lipid metabolism; steroid degradation. Probably involved in steroid metabolism. This chain is 3-alpha-(or 20-beta)-hydroxysteroid dehydrogenase (fabG3), found in Mycobacterium tuberculosis (strain CDC 1551 / Oshkosh).